Consider the following 99-residue polypeptide: Beta-defensin 127 (99 aa).

Residues 1–20 (MGLFMIIAILLFQKPTVTEQ) form the signal peptide. 3 cysteine pairs are disulfide-bonded: cysteine 24–cysteine 53, cysteine 33–cysteine 47, and cysteine 37–cysteine 54. The propeptide occupies 66 to 99 (ITKPSHPKPATLALTLQDYVTIIENFPSLKTQST).

This sequence belongs to the beta-defensin family.

It localises to the secreted. In terms of biological role, has antibacterial activity. The sequence is that of Beta-defensin 127 (DEFB127) from Pan troglodytes (Chimpanzee).